The primary structure comprises 555 residues: Potassium-transporting ATPase potassium-binding subunit (555 aa).

A run of 10 helical transmembrane segments spans residues 2–22, 60–80, 130–150, 173–193, 246–266, 278–298, 374–394, 412–432, 483–503, and 525–545; these read IWVA…PTGI, QYAL…YFIF, IGIT…VMAF, VFLP…VPQT, MSNI…PFTY, ILFV…TTSE, AGFV…GLMV, LIAV…ALAL, LVMF…AASL, and GIFI…MLVL.

It belongs to the KdpA family. The system is composed of three essential subunits: KdpA, KdpB and KdpC.

The protein resides in the cell membrane. Functionally, part of the high-affinity ATP-driven potassium transport (or Kdp) system, which catalyzes the hydrolysis of ATP coupled with the electrogenic transport of potassium into the cytoplasm. This subunit binds the extracellular potassium ions and delivers the ions to the membrane domain of KdpB through an intramembrane tunnel. This Bacillus thuringiensis subsp. konkukian (strain 97-27) protein is Potassium-transporting ATPase potassium-binding subunit.